The sequence spans 117 residues: Anti-sigma F factor antagonist (117 aa).

The STAS domain maps to Leu3–Leu113. The residue at position 58 (Ser58) is a Phosphoserine.

Belongs to the anti-sigma-factor antagonist family. Post-translationally, phosphorylated by SpoIIAB on a serine residue.

Functionally, in the phosphorylated form it could act as an anti-anti-sigma factor that counteracts SpoIIAB and thus releases sigma f from inhibition. This is Anti-sigma F factor antagonist (spoIIAA) from Bacillus subtilis (strain 168).